The primary structure comprises 557 residues: Hydroxylamine reductase (557 aa).

[4Fe-4S] cluster-binding residues include C4, C7, C19, and C26. Hybrid [4Fe-2O-2S] cluster contacts are provided by H253, E277, C321, C408, C436, C461, E495, and K497. Position 408 is a cysteine persulfide (C408).

Belongs to the HCP family. [4Fe-4S] cluster is required as a cofactor. It depends on hybrid [4Fe-2O-2S] cluster as a cofactor.

The protein resides in the cytoplasm. The catalysed reaction is A + NH4(+) + H2O = hydroxylamine + AH2 + H(+). Functionally, catalyzes the reduction of hydroxylamine to form NH(3) and H(2)O. This chain is Hydroxylamine reductase, found in Acidithiobacillus ferrooxidans (strain ATCC 53993 / BNL-5-31) (Leptospirillum ferrooxidans (ATCC 53993)).